A 358-amino-acid chain; its full sequence is Cyclin-D1-binding protein 1 (358 aa).

Interaction with TCF3 regions lie at residues 1–183 (MESA…VDLV) and 149–358 (ISYN…EVES). Interaction with RPLP0 stretches follow at residues 1 to 189 (MESA…AHEE) and 238 to 358 (LIIP…EVES). Residues 1-207 (MESAAVSAAP…DPYCGLLNDI (207 aa)) are required for interaction with CCND1.

The protein belongs to the CCNDBP1 family. In terms of assembly, interacts with CCND1 and GRAP2. May also interact with COPS5, RPLP0, SIRT6, SYF2 and TCF3. Phosphorylated.

The protein resides in the cytoplasm. It localises to the nucleus. Its function is as follows. May negatively regulate cell cycle progression. May act at least in part via inhibition of the cyclin-D1/CDK4 complex, thereby preventing phosphorylation of RB1 and blocking E2F-dependent transcription. This Bos taurus (Bovine) protein is Cyclin-D1-binding protein 1 (CCNDBP1).